The following is a 165-amino-acid chain: Ubiquitin-like protein ISG15 (165 aa).

2 consecutive Ubiquitin-like domains span residues Gly-2–Cys-78 and Asp-79–Gly-157. Cys-78 is subject to S-nitrosocysteine; alternate. An LRLRGG motif is present at residues Leu-152 to Gly-157. The tract at residues Arg-153 to Gly-157 is involved in the ligation of specific target proteins. Residue Gly-157 forms a Glycyl lysine isopeptide (Gly-Lys) (interchain with K-? in acceptor proteins) linkage. Residues Gly-158 to Ser-165 constitute a propeptide, removed in mature form.

As to quaternary structure, homodimer; disulfide-linked. Interacts with, and is conjugated to its targets by UBE1L (E1 enzyme) and UBE2E2 (E2 enzyme). Interacts with NEDD4. Interacts with PARP12; this interaction inhibits PINK1/Parkin-dependent mitophagy. In terms of assembly, (Microbial infection) Interacts with vaccinia virus protein E3. (Microbial infection) Interaction with influenza B NS1 protein inhibits its conjugation. As to quaternary structure, (Microbial infection) Interacts (via C-terminus) with Crimean-Congo hemorrhagic fever virus (CCHFV) RNA-directed RNA polymerase L (via N-terminus); the deISGylase activity of the viral protein interferes with antiviral signaling pathways mediated by NF-kappaB and IRF signalings. In terms of assembly, (Microbial infection) Interacts with human cytomegalovirus protein UL26; this interaction inhibits global protein ISGylation. In terms of processing, S-nitrosylation decreases its dimerization, thereby increasing the availability as well as the solubility of monomeric ISG15 for its conjugation to cellular proteins. Induced as an inactive, precursor protein that is cleaved by specific proteases to expose the C-terminal diglycine (LRLRGG) motif. This motif is essential not only for its conjugation to substrates but also for its recognition by the relevant processing proteases. In terms of tissue distribution, detected in lymphoid cells, striated and smooth muscle, several epithelia and neurons. Expressed in neutrophils, monocytes and lymphocytes. Enhanced expression seen in pancreatic adenocarcinoma, endometrial cancer, and bladder cancer, as compared to non-cancerous tissue. In bladder cancer, the increase in expression exhibits a striking positive correlation with more advanced stages of the disease.

The protein localises to the cytoplasm. Its subcellular location is the secreted. Functionally, ubiquitin-like protein which plays a key role in the innate immune response to viral infection either via its conjugation to a target protein (ISGylation) or via its action as a free or unconjugated protein. ISGylation involves a cascade of enzymatic reactions involving E1, E2, and E3 enzymes which catalyze the conjugation of ISG15 to a lysine residue in the target protein. Its target proteins include IFIT1, MX1/MxA, PPM1B, UBE2L6, UBA7, CHMP5, CHMP2A, CHMP4B and CHMP6. Isgylation of the viral sensor IFIH1/MDA5 promotes IFIH1/MDA5 oligomerization and triggers activation of innate immunity against a range of viruses, including coronaviruses, flaviviruses and picornaviruses. Can also isgylate: EIF2AK2/PKR which results in its activation, RIGI which inhibits its function in antiviral signaling response, EIF4E2 which enhances its cap structure-binding activity and translation-inhibition activity, UBE2N and UBE2E1 which negatively regulates their activity, IRF3 which inhibits its ubiquitination and degradation and FLNB which prevents its ability to interact with the upstream activators of the JNK cascade thereby inhibiting IFNA-induced JNK signaling. Exhibits antiviral activity towards both DNA and RNA viruses, including influenza A, HIV-1 and Ebola virus. Restricts HIV-1 and ebola virus via disruption of viral budding. Inhibits the ubiquitination of HIV-1 Gag and host TSG101 and disrupts their interaction, thereby preventing assembly and release of virions from infected cells. Inhibits Ebola virus budding mediated by the VP40 protein by disrupting ubiquitin ligase activity of NEDD4 and its ability to ubiquitinate VP40. ISGylates influenza A virus NS1 protein which causes a loss of function of the protein and the inhibition of virus replication. The secreted form of ISG15 can: induce natural killer cell proliferation, act as a chemotactic factor for neutrophils and act as a IFN-gamma-inducing cytokine playing an essential role in antimycobacterial immunity. The secreted form acts through the integrin ITGAL/ITGB2 receptor to initiate activation of SRC family tyrosine kinases including LYN, HCK and FGR which leads to secretion of IFNG and IL10; the interaction is mediated by ITGAL. This chain is Ubiquitin-like protein ISG15, found in Homo sapiens (Human).